A 1429-amino-acid polypeptide reads, in one-letter code: Probable ATP-dependent RNA helicase spindle-E (1429 aa).

The 168-residue stretch at valine 121–valine 288 folds into the Helicase ATP-binding domain. Glycine 134–threonine 141 is a binding site for ATP. A DEAH box motif is present at residues aspartate 234–histidine 237. Residues glutamine 349 to aspartate 521 form the Helicase C-terminal domain. One can recognise a Tudor domain in the interval alanine 933–glutamine 996.

This sequence belongs to the DEAD box helicase family. DEAH subfamily.

The protein localises to the cytoplasm. It catalyses the reaction ATP + H2O = ADP + phosphate + H(+). In terms of biological role, probable ATP-binding RNA helicase which plays a central role during spermatogenesis and oogenesis by repressing transposable elements and preventing their mobilization, which is essential for the germline integrity. Acts via the piRNA metabolic process, which mediates the repression of transposable elements during meiosis by forming complexes composed of piRNAs and Piwi and govern the methylation and subsequent repression of transposons. Involved in the repression of LTR retrotransposon copia. Also involved in telomere regulation by repressing specialized telomeric retroelements HeT-A, TAHRE, and TART; Drosophila telomeres being maintained by transposition of specialized telomeric retroelements. Involved in telomeric trans-silencing, a repression mechanism by which a transposon or a transgene inserted in subtelomeric heterochromatin has the capacity to repress in trans in the female germline, a homologous transposon, or transgene located in euchromatin. Involved in the repression of testis-expressed Stellate genes by the homologous Su(Ste) repeats. Required for anteroposterior and dorsoventral axis formation during oogenesis. The chain is Probable ATP-dependent RNA helicase spindle-E (spn-E) from Drosophila ananassae (Fruit fly).